The primary structure comprises 190 residues: dTTP/UTP pyrophosphatase (190 aa).

Residue Asp71 is the Proton acceptor of the active site.

It belongs to the Maf family. YhdE subfamily. It depends on a divalent metal cation as a cofactor.

The protein localises to the cytoplasm. The enzyme catalyses dTTP + H2O = dTMP + diphosphate + H(+). The catalysed reaction is UTP + H2O = UMP + diphosphate + H(+). In terms of biological role, nucleoside triphosphate pyrophosphatase that hydrolyzes dTTP and UTP. May have a dual role in cell division arrest and in preventing the incorporation of modified nucleotides into cellular nucleic acids. In Xanthomonas euvesicatoria pv. vesicatoria (strain 85-10) (Xanthomonas campestris pv. vesicatoria), this protein is dTTP/UTP pyrophosphatase.